Here is a 186-residue protein sequence, read N- to C-terminus: Elongation factor P (186 aa).

This sequence belongs to the elongation factor P family.

The protein localises to the cytoplasm. It functions in the pathway protein biosynthesis; polypeptide chain elongation. Involved in peptide bond synthesis. Stimulates efficient translation and peptide-bond synthesis on native or reconstituted 70S ribosomes in vitro. Probably functions indirectly by altering the affinity of the ribosome for aminoacyl-tRNA, thus increasing their reactivity as acceptors for peptidyl transferase. This is Elongation factor P from Streptococcus gordonii (strain Challis / ATCC 35105 / BCRC 15272 / CH1 / DL1 / V288).